The primary structure comprises 139 residues: Actin-depolymerizing factor 3 (139 aa).

Residues 5-139 (ASGMAVHDDC…DLDVFKSRAN (135 aa)) form the ADF-H domain. Serine 6 is subject to Phosphoserine.

This sequence belongs to the actin-binding proteins ADF family.

Its subcellular location is the cytoplasm. It is found in the cytoskeleton. Its function is as follows. Actin-depolymerizing protein. Severs actin filaments (F-actin) and binds to actin monomers. The protein is Actin-depolymerizing factor 3 (ADF3) of Arabidopsis thaliana (Mouse-ear cress).